A 330-amino-acid polypeptide reads, in one-letter code: Inactive hydroxysteroid dehydrogenase-like protein 1 (330 aa).

An N-acetylalanine modification is found at alanine 2. The required for mitochondria translocation stretch occupies residues 2 to 82 (AAVDSFYLLY…SGATDGIGRA (81 aa)). NADP(+)-binding positions include 74–80 (GATDGIG), aspartate 125, and lysine 222.

Belongs to the short-chain dehydrogenases/reductases (SDR) family. 17-beta-HSD 3 subfamily. As to quaternary structure, interacts with STYXL1.

The protein localises to the mitochondrion. This Pongo abelii (Sumatran orangutan) protein is Inactive hydroxysteroid dehydrogenase-like protein 1 (HSDL1).